Here is a 251-residue protein sequence, read N- to C-terminus: 1-(5-phosphoribosyl)-5-[(5-phosphoribosylamino)methylideneamino] imidazole-4-carboxamide isomerase (251 aa).

The Proton acceptor role is filled by aspartate 8. The active-site Proton donor is aspartate 131.

It belongs to the HisA/HisF family.

The protein localises to the cytoplasm. The enzyme catalyses 1-(5-phospho-beta-D-ribosyl)-5-[(5-phospho-beta-D-ribosylamino)methylideneamino]imidazole-4-carboxamide = 5-[(5-phospho-1-deoxy-D-ribulos-1-ylimino)methylamino]-1-(5-phospho-beta-D-ribosyl)imidazole-4-carboxamide. The protein operates within amino-acid biosynthesis; L-histidine biosynthesis; L-histidine from 5-phospho-alpha-D-ribose 1-diphosphate: step 4/9. The chain is 1-(5-phosphoribosyl)-5-[(5-phosphoribosylamino)methylideneamino] imidazole-4-carboxamide isomerase from Azoarcus sp. (strain BH72).